The primary structure comprises 246 residues: Carboxylesterase (246 aa).

Catalysis depends on Ser93, which acts as the Nucleophile. Residues Asp192 and His222 each act as charge relay system in the active site.

It belongs to the lipase/esterase LIP3/BchO family. As to quaternary structure, homodimer.

It carries out the reaction a carboxylic ester + H2O = an alcohol + a carboxylate + H(+). Its function is as follows. Involved in the detoxification of xenobiotics. Shows maximal activity with C6 substrates, with gradually decreasing activity from C8 to C12 substrates. No activity for higher chain length substrates acids rather than long-chain ones. The protein is Carboxylesterase (est) of Geobacillus stearothermophilus (Bacillus stearothermophilus).